A 129-amino-acid polypeptide reads, in one-letter code: Succinate dehydrogenase cytochrome b556 subunit (129 aa).

The Cytoplasmic segment spans residues 1–26; it reads MIRNVKKQRPVNLDLQTIRFPITAIA. Residues 27-52 form a helical membrane-spanning segment; that stretch reads SILHRVSGVITFVAVGILLWLLGTSL. The Periplasmic portion of the chain corresponds to 53-68; it reads SSPEGFEQASAIMGSF. A helical transmembrane segment spans residues 69–89; the sequence is FVKFIMWGILTALAYHVVVGI. Residue histidine 84 coordinates heme. The Cytoplasmic segment spans residues 90-108; it reads RHMMMDFGYLEETFEAGKR. The helical transmembrane segment at 109–129 threads the bilayer; that stretch reads SAKISFVITVVLSLLAGVLVW.

This sequence belongs to the cytochrome b560 family. As to quaternary structure, part of an enzyme complex containing four subunits: a flavoprotein, an iron-sulfur protein, plus two membrane-anchoring proteins, SdhC and SdhD. The complex can form homotrimers. Heme is required as a cofactor.

The protein resides in the cell inner membrane. It functions in the pathway carbohydrate metabolism; tricarboxylic acid cycle. In terms of biological role, membrane-anchoring subunit of succinate dehydrogenase (SDH). This chain is Succinate dehydrogenase cytochrome b556 subunit (sdhC), found in Escherichia coli O157:H7.